Here is a 149-residue protein sequence, read N- to C-terminus: Globin (149 aa).

One can recognise a Globin domain in the interval 2–149; sequence VLTKDEFDSL…KIFTGVAGQL (148 aa). Residue His100 coordinates heme.

The protein belongs to the globin family. In terms of assembly, monomer.

Functionally, oxygen binding protein. In Isoparorchis hypselobagri (Giant trematode), this protein is Globin.